The primary structure comprises 888 residues: Prodigiosin synthesizing transferase PigC (888 aa).

The protein belongs to the PigC family.

It participates in antibiotic biosynthesis; prodigiosin biosynthesis. Functionally, involved in the biosynthesis of 2-methyl-3-n-amyl-pyrrole (MAP), one of the terminal products involved in the biosynthesis of the red antibiotic prodigiosin (Pig). Catalyzes the transfer of 2-methyl-3-n-amyl-pyrrole (MAP) to 4-methoxy-2,2'-bipyrrole-5-carbaldehyde (MBC) to yield prodigiosin. It is able to use substrates with a variety of monocyclic rings in place of the pyrrolic ring A of its natural substrate. This chain is Prodigiosin synthesizing transferase PigC, found in Serratia marcescens.